A 742-amino-acid chain; its full sequence is Envelope glycoprotein H (742 aa).

An N-terminal signal peptide occupies residues 1-23; the sequence is MRPGLPSYLIILAVCLFSHLLSS. Residues 24-719 are Virion surface-facing; sequence RYGAEAVSEP…VVDATDSRLL (696 aa). Asn55, Asn62, Asn67, and Asn192 each carry an N-linked (GlcNAc...) asparagine; by host glycan. A disulfide bond links Cys195 and Cys211. Residues 217-280 form an interaction with gL region; that stretch reads YLIDELRYVK…QTEKHELLVL (64 aa). Disulfide bonds link Cys330–Cys383, Cys495–Cys522, and Cys571–Cys624. N-linked (GlcNAc...) asparagine; by host glycosylation is found at Asn641 and Asn700. The chain crosses the membrane as a helical span at residues 720 to 740; sequence MMSVYALSAIIGIYLLYRMLK. Residues 741–742 lie on the Intravirion side of the membrane; sequence TC.

Belongs to the herpesviridae glycoprotein H family. As to quaternary structure, interacts with glycoprotein L (gL); this interaction is necessary for the correct processing and cell surface expression of gH. The heterodimer gH/gL seems to interact with gB trimers during fusion. Forms the envelope pentamer complex (PC) composed of gH, gL, UL128, UL130, and UL131A. The pentamer interacts with host NRP2. Forms the envelope trimer complex composed of gH, gL, and gO. The trimer interacts with host PDGFRA. The trimer also interacts with host EPHA2. The trimer also interacts with host TGFBR3. Interacts with UL116. N-glycosylated, O-glycosylated, and sialylated.

It is found in the virion membrane. The protein resides in the host cell membrane. It localises to the host endosome membrane. Functionally, the heterodimer glycoprotein H-glycoprotein L is required for the fusion of viral and plasma membranes leading to virus entry into the host cell. Following initial binding to host receptor, membrane fusion is mediated by the fusion machinery composed of gB and the heterodimer gH/gL. May also be involved in the fusion between the virion envelope and the outer nuclear membrane during virion morphogenesis. In human cytomegalovirus, forms two distincts complexes to mediate viral entry, a trimer and a pentamer at the surface of the virion envelope. The gH-gL-gO trimer is required for infection in fibroblasts by interacting with host PDGFRA, and in glioblastoma cells by interacting with host EPHA2. Thsi trimer may also be required in other cell types using host TGFBR3. The gH-gL-UL128-UL130-UL131A pentamer is essential for viral entry in epithelial, endothelial and myeloid cells via interaction with host NRP2. The polypeptide is Envelope glycoprotein H (Human cytomegalovirus (strain Merlin) (HHV-5)).